A 262-amino-acid polypeptide reads, in one-letter code: Thiazole synthase (262 aa).

Lys-97 functions as the Schiff-base intermediate with DXP in the catalytic mechanism. Residues Gly-158, Ala-185–Gly-186, and Asn-207–Thr-208 each bind 1-deoxy-D-xylulose 5-phosphate. The interval Asp-243–Tyr-262 is disordered.

This sequence belongs to the ThiG family. In terms of assembly, homotetramer. Forms heterodimers with either ThiH or ThiS.

It is found in the cytoplasm. The catalysed reaction is [ThiS sulfur-carrier protein]-C-terminal-Gly-aminoethanethioate + 2-iminoacetate + 1-deoxy-D-xylulose 5-phosphate = [ThiS sulfur-carrier protein]-C-terminal Gly-Gly + 2-[(2R,5Z)-2-carboxy-4-methylthiazol-5(2H)-ylidene]ethyl phosphate + 2 H2O + H(+). The protein operates within cofactor biosynthesis; thiamine diphosphate biosynthesis. Functionally, catalyzes the rearrangement of 1-deoxy-D-xylulose 5-phosphate (DXP) to produce the thiazole phosphate moiety of thiamine. Sulfur is provided by the thiocarboxylate moiety of the carrier protein ThiS. In vitro, sulfur can be provided by H(2)S. The chain is Thiazole synthase from Neisseria meningitidis serogroup C (strain 053442).